The chain runs to 196 residues: MSHALDAAALDQLFRTARTQNAFLDKPVPASLLQELYDLVKWGPTAANTTPARFVFVTSKEAKAKLAPALSEGNHDKTMAAPVTAIIGFDLDFHEKLPYLFPHTDAKAWFDGPQEGRHEAALRNGSLQGAYLILAARALGLDAGPMSGFDPAKVDEAFFAGTSIKSNFLVNLGYGDPAGLFPRLPRLSFDEAARIA.

The protein belongs to the nitroreductase family. HadB/RutE subfamily. FMN is required as a cofactor.

The protein is Putative NADH dehydrogenase/NAD(P)H nitroreductase Smlt0482 of Stenotrophomonas maltophilia (strain K279a).